Here is a 408-residue protein sequence, read N- to C-terminus: MTLTIDTSTPESRALLRPDPTVEKKPLIGLSREEMAQALASIGVPERQVNMRVRQLWHWLYVRGVSDFSRMFNISKELRAKLDEHFTIARPEIVEEQISQDGTRKWLLRFPPRGAGRPVEVETVYIPEEDRGTLCISSQVGCTLTCSFCHTGTQKMVRNLTAGEILDQLLIARDRLGDFPDADTPDGAIVPAEGRKITNIVMMGMGEPLYNFENVKQALLVASDGDGLSLSKRRITLSTSGVVPEIYRTGEEIGIMLAISLHAVRDELRNELVPINKKYPLKDLLDACRAYPGLSNARRITFEYVMLKGVNDSLDDARELVRLLKGIPAKINLIPFNPWPGSAYECSDWEQIEKFAELVNRAGYASPIRTPRGRDILAACGQLKSASERMKKTERLKLEAMMIAGHGD.

The Proton acceptor role is filled by Glu122. One can recognise a Radical SAM core domain in the interval 128-369; the sequence is EEDRGTLCIS…NRAGYASPIR (242 aa). An intrachain disulfide couples Cys135 to Cys380. Cys142, Cys146, and Cys149 together coordinate [4Fe-4S] cluster. S-adenosyl-L-methionine-binding positions include 206–207, Ser238, 260–262, and Asn337; these read GE and SLH. Catalysis depends on Cys380, which acts as the S-methylcysteine intermediate.

This sequence belongs to the radical SAM superfamily. RlmN family. Requires [4Fe-4S] cluster as cofactor.

Its subcellular location is the cytoplasm. It catalyses the reaction adenosine(2503) in 23S rRNA + 2 reduced [2Fe-2S]-[ferredoxin] + 2 S-adenosyl-L-methionine = 2-methyladenosine(2503) in 23S rRNA + 5'-deoxyadenosine + L-methionine + 2 oxidized [2Fe-2S]-[ferredoxin] + S-adenosyl-L-homocysteine. The enzyme catalyses adenosine(37) in tRNA + 2 reduced [2Fe-2S]-[ferredoxin] + 2 S-adenosyl-L-methionine = 2-methyladenosine(37) in tRNA + 5'-deoxyadenosine + L-methionine + 2 oxidized [2Fe-2S]-[ferredoxin] + S-adenosyl-L-homocysteine. In terms of biological role, specifically methylates position 2 of adenine 2503 in 23S rRNA and position 2 of adenine 37 in tRNAs. m2A2503 modification seems to play a crucial role in the proofreading step occurring at the peptidyl transferase center and thus would serve to optimize ribosomal fidelity. This is Dual-specificity RNA methyltransferase RlmN from Chelativorans sp. (strain BNC1).